The sequence spans 317 residues: MAAPMELFCWSGGWGLPSVDLDSLAVLTYARFTGAPLKVHKITNPWRSPSGTLPALRTSQGEVISVPHKIITHLRKEKYNADYDLSARQGADTLAFMSLLEEKLLPVLIHTFWVDAKNYVEVTRKWYAEAMPFPLNFFLPGRMQRQYMERLQLLCGEHRPEEEEELEKELYQEARECLTLLSQRLGAQKFFFGDAPASLDAFVFSYLALLQQAKLPSGKLQAHLRGLHNLCAYCTHILSLYFPWEGAEVPRPRQTPASSETEEEPYRRRNQILSVLAGLAAMAGYALLSGIVSIQRAPPARAPSTRALGMAEEDEEE.

Glycyl lysine isopeptide (Lys-Gly) (interchain with G-Cter in ubiquitin) cross-links involve residues Lys38, Lys41, and Lys78. The chain crosses the membrane as a helical span at residues 164–184 (EELEKELYQEARECLTLLSQR).

Belongs to the metaxin family. Interacts with MTX2/metaxin-2. Associates with the mitochondrial contact site and cristae organizing system (MICOS) complex, composed of at least MICOS10/MIC10, CHCHD3/MIC19, CHCHD6/MIC25, APOOL/MIC27, IMMT/MIC60, APOO/MIC23/MIC26 and QIL1/MIC13. This complex was also known under the names MINOS or MitOS complex. The MICOS complex associates with mitochondrial outer membrane proteins SAMM50, MTX1 and MTX2 (together described as components of the mitochondrial outer membrane sorting assembly machinery (SAM) complex) and DNAJC11, mitochondrial inner membrane protein TMEM11 and with HSPA9. The MICOS and SAM complexes together with DNAJC11 are part of a large protein complex spanning both membranes termed the mitochondrial intermembrane space bridging (MIB) complex. Interacts with ARMC1. Post-translationally, ubiquitinated by PRKN during mitophagy, leading to its degradation and enhancement of mitophagy. Deubiquitinated by USP30.

The protein resides in the mitochondrion outer membrane. Involved in transport of proteins into the mitochondrion. Essential for embryonic development. In Sus scrofa (Pig), this protein is Metaxin-1 (MTX1).